Reading from the N-terminus, the 25-residue chain is Small ribosomal subunit protein eS32 (25 aa).

Positions 1 to 25 are disordered; sequence MRAKWRKKRMRRLKRKRRKMRQRSK.

It belongs to the eukaryotic ribosomal protein eS32 family. Component of the large ribosomal subunit.

It is found in the cytoplasm. In terms of biological role, component of the small ribosomal subunit. The ribosome is a large ribonucleoprotein complex responsible for the synthesis of proteins in the cell. The polypeptide is Small ribosomal subunit protein eS32 (rpl41) (Cyprinus carpio (Common carp)).